A 172-amino-acid polypeptide reads, in one-letter code: Myosin regulatory light polypeptide 9 (172 aa).

The segment covering 1-16 (MSSKRAKTKTTKKRPQ) has biased composition (basic residues). The segment at 1-20 (MSSKRAKTKTTKKRPQRATS) is disordered. An N-acetylserine modification is found at Ser2. Thr19 carries the post-translational modification Phosphothreonine; by MLCK, CIT and ROCK2. A Phosphoserine; by CDC42BP, CIT, MLCK, PAK1, ROCK1, ROCK2, DAPK1, DAPK2 and ZIPK/DAPK3 modification is found at Ser20. EF-hand domains follow at residues 29-64 (SQIQ…LGKN), 98-133 (DPED…MGDR), and 134-169 (FTDE…GAKD). 4 residues coordinate Ca(2+): Asp42, Asn44, Asp46, and Asp53.

In terms of assembly, myosin is a hexamer of 2 heavy chains and 4 light chains: interacts with myosin heavy chain MYO19. Interacts with LUZP1; the interaction results in inhibition of phosphorylation of MYL9 by DAPK3. Post-translationally, phosphorylation increases the actin-activated myosin ATPase activity and thereby regulates the contractile activity. It is required to generate the driving force in the migration of the cells but not necessary for localization of myosin-2 at the leading edge. Phosphorylation is required for myotube formation. Phosphorylated by DAPK3; DAPK3-mediated phosphorylation is inhibited by LUZP1.

It is found in the cytoplasm. Its subcellular location is the cytoskeleton. The protein resides in the cell cortex. Functionally, myosin regulatory subunit that plays an important role in regulation of both smooth muscle and nonmuscle cell contractile activity via its phosphorylation. Implicated in cytokinesis, receptor capping, and cell locomotion. In myoblasts, may regulate PIEZO1-dependent cortical actomyosin assembly involved in myotube formation. This is Myosin regulatory light polypeptide 9 (MYL9) from Bos taurus (Bovine).